We begin with the raw amino-acid sequence, 380 residues long: Cytochrome b (380 aa).

The next 4 membrane-spanning stretches (helical) occupy residues 34–54, 78–99, 114–134, and 179–199; these read FGSLLPVCLIAQIATGLFLAM, WLLRNLHANGASFFFICIYFHI, WNIGVILLLLVMATAFVGYVL, and FFTFDFILLFIIAATSLIHLL. The heme b site is built by His84 and His98. Residue His197 participates in heme b binding. Position 202 (His202) interacts with a ubiquinone. 4 helical membrane passes run 227–247, 289–309, 321–341, and 348–368; these read FKDLLGFIILLGALAILSTFA, LGGVLALLLSIMVLFLMPITH, TAKAFFWALIANTIILTWIGG, and FISIGQIASGLYFLIFVLIIP.

The protein belongs to the cytochrome b family. As to quaternary structure, the cytochrome bc1 complex contains 3 respiratory subunits (MT-CYB, CYC1 and UQCRFS1), 2 core proteins (UQCRC1 and UQCRC2) and probably 6 low-molecular weight proteins. Heme b is required as a cofactor.

It is found in the mitochondrion inner membrane. Functionally, component of the ubiquinol-cytochrome c reductase complex (complex III or cytochrome b-c1 complex) that is part of the mitochondrial respiratory chain. The b-c1 complex mediates electron transfer from ubiquinol to cytochrome c. Contributes to the generation of a proton gradient across the mitochondrial membrane that is then used for ATP synthesis. The sequence is that of Cytochrome b (mt-cyb) from Glandirana rugosa (Japanese wrinkled frog).